The primary structure comprises 468 residues: RUS family member 1 (468 aa).

Residue Ala-2 is modified to N-acetylalanine. The residue at position 49 (Thr-49) is a Phosphothreonine. A helical membrane pass occupies residues 247 to 267; that stretch reads LLMLPLVSGCPGFSLGCFFFL.

It belongs to the RUS1 family.

Its subcellular location is the membrane. This Pongo abelii (Sumatran orangutan) protein is RUS family member 1 (Rusf1).